The primary structure comprises 408 residues: CinA-like protein (408 aa).

It belongs to the CinA family.

The polypeptide is CinA-like protein (Thermotoga sp. (strain RQ2)).